The sequence spans 156 residues: Small ribosomal subunit protein uS7 (156 aa).

Belongs to the universal ribosomal protein uS7 family. As to quaternary structure, part of the 30S ribosomal subunit. Contacts proteins S9 and S11.

Functionally, one of the primary rRNA binding proteins, it binds directly to 16S rRNA where it nucleates assembly of the head domain of the 30S subunit. Is located at the subunit interface close to the decoding center, probably blocks exit of the E-site tRNA. The protein is Small ribosomal subunit protein uS7 of Moorella thermoacetica (strain ATCC 39073 / JCM 9320).